Reading from the N-terminus, the 234-residue chain is Sugar fermentation stimulation protein homolog (234 aa).

This sequence belongs to the SfsA family.

The sequence is that of Sugar fermentation stimulation protein homolog from Shewanella piezotolerans (strain WP3 / JCM 13877).